Here is a 186-residue protein sequence, read N- to C-terminus: Large ribosomal subunit protein uL5 (186 aa).

It belongs to the universal ribosomal protein uL5 family. In terms of assembly, part of the 50S ribosomal subunit; part of the 5S rRNA/L5/L18/L25 subcomplex. Contacts the 5S rRNA and the P site tRNA. Forms a bridge to the 30S subunit in the 70S ribosome.

In terms of biological role, this is one of the proteins that bind and probably mediate the attachment of the 5S RNA into the large ribosomal subunit, where it forms part of the central protuberance. In the 70S ribosome it contacts protein S13 of the 30S subunit (bridge B1b), connecting the 2 subunits; this bridge is implicated in subunit movement. Contacts the P site tRNA; the 5S rRNA and some of its associated proteins might help stabilize positioning of ribosome-bound tRNAs. This Porphyromonas gingivalis (strain ATCC 33277 / DSM 20709 / CIP 103683 / JCM 12257 / NCTC 11834 / 2561) protein is Large ribosomal subunit protein uL5.